The sequence spans 134 residues: Proline-rich nuclear receptor coactivator 2 (134 aa).

The disordered stretch occupies residues 1–74 (MGGGERYNIP…NNSNWNASLS (74 aa)). Composition is skewed to polar residues over residues 11 to 24 (DPQS…QQQH) and 52 to 61 (SAVQNGGKTK). The span at 62 to 74 (SLSNNSNWNASLS) shows a compositional bias: low complexity. An SH3-binding motif is present at residues 94 to 100 (SEPPSPS).

This sequence belongs to the PNRC family. PNRC2 subfamily. Interacts with UPF1/RENT1; preferentially interacts with hyperphosphorylated form. Interacts with DCP1A. Interacts with many nuclear receptors including ESR1, ESRRA, ESRRG, NR3C1/GR, NR5A1, PGR, TR, RAR and RXR.

Its subcellular location is the nucleus. The protein localises to the cytoplasm. The protein resides in the P-body. Involved in nonsense-mediated mRNA decay (NMD) by acting as a bridge between the mRNA decapping complex and the NMD machinery. May act by targeting the NMD machinery to the P-body and recruiting the decapping machinery to aberrant mRNAs. Required for UPF1/RENT1 localization to the P-body. Plays a role in glucocorticoid receptor-mediated mRNA degradation by interacting with the glucocorticoid receptor NR3C1 in a ligand-dependent manner when it is bound to the 5' UTR of target mRNAs and recruiting the RNA helicase UPF1 and the mRNA-decapping enzyme DCP1A, leading to RNA decay. Also acts as a nuclear receptor coactivator. May play a role in controlling the energy balance between energy storage and energy expenditure. The sequence is that of Proline-rich nuclear receptor coactivator 2 (Pnrc2) from Rattus norvegicus (Rat).